We begin with the raw amino-acid sequence, 137 residues long: ATP synthase epsilon chain, chloroplastic (137 aa).

It belongs to the ATPase epsilon chain family. F-type ATPases have 2 components, CF(1) - the catalytic core - and CF(0) - the membrane proton channel. CF(1) has five subunits: alpha(3), beta(3), gamma(1), delta(1), epsilon(1). CF(0) has three main subunits: a, b and c.

It localises to the plastid. Its subcellular location is the chloroplast thylakoid membrane. Its function is as follows. Produces ATP from ADP in the presence of a proton gradient across the membrane. This Medicago sativa (Alfalfa) protein is ATP synthase epsilon chain, chloroplastic.